A 607-amino-acid polypeptide reads, in one-letter code: Aspartate--tRNA(Asp/Asn) ligase (607 aa).

E173 lines the L-aspartate pocket. The interval 197–200 (QLFK) is aspartate. R219 provides a ligand contact to L-aspartate. ATP contacts are provided by residues 219-221 (RDE) and Q228. H456 lines the L-aspartate pocket. Residue E498 participates in ATP binding. R505 provides a ligand contact to L-aspartate. 550–553 (GLDR) is a binding site for ATP.

It belongs to the class-II aminoacyl-tRNA synthetase family. Type 1 subfamily. In terms of assembly, homodimer.

It is found in the cytoplasm. The enzyme catalyses tRNA(Asx) + L-aspartate + ATP = L-aspartyl-tRNA(Asx) + AMP + diphosphate. Aspartyl-tRNA synthetase with relaxed tRNA specificity since it is able to aspartylate not only its cognate tRNA(Asp) but also tRNA(Asn). Reaction proceeds in two steps: L-aspartate is first activated by ATP to form Asp-AMP and then transferred to the acceptor end of tRNA(Asp/Asn). In Magnetococcus marinus (strain ATCC BAA-1437 / JCM 17883 / MC-1), this protein is Aspartate--tRNA(Asp/Asn) ligase.